The following is a 56-amino-acid chain: Small ribosomal subunit protein uS14 (56 aa).

Residues cysteine 21, cysteine 24, cysteine 39, and cysteine 42 each contribute to the Zn(2+) site.

It belongs to the universal ribosomal protein uS14 family. The cofactor is Zn(2+).

The polypeptide is Small ribosomal subunit protein uS14 (RPS29) (Griffithsia japonica (Red alga)).